Consider the following 167-residue polypeptide: NADH-quinone oxidoreductase subunit B 2 (167 aa).

Residues Cys39, Cys40, Cys104, and Cys134 each coordinate [4Fe-4S] cluster.

This sequence belongs to the complex I 20 kDa subunit family. As to quaternary structure, NDH-1 is composed of 14 different subunits. Subunits NuoB, C, D, E, F, and G constitute the peripheral sector of the complex. Requires [4Fe-4S] cluster as cofactor.

The protein localises to the cell inner membrane. It carries out the reaction a quinone + NADH + 5 H(+)(in) = a quinol + NAD(+) + 4 H(+)(out). Functionally, NDH-1 shuttles electrons from NADH, via FMN and iron-sulfur (Fe-S) centers, to quinones in the respiratory chain. Couples the redox reaction to proton translocation (for every two electrons transferred, four hydrogen ions are translocated across the cytoplasmic membrane), and thus conserves the redox energy in a proton gradient. The polypeptide is NADH-quinone oxidoreductase subunit B 2 (Burkholderia mallei (strain NCTC 10247)).